The sequence spans 438 residues: Choline monooxygenase, chloroplastic (438 aa).

The N-terminal 58 residues, 1-58 (MAASATTMLLKYPTTVCGIPNSSANNSTDPSNNIVQIPQTTTTNSPLLKFRTPNKPVN), are a transit peptide targeting the chloroplast. The 108-residue stretch at 121 to 228 (WQVAGYSDQV…VAVWGPFILI (108 aa)) folds into the Rieske domain. [2Fe-2S] cluster contacts are provided by C163, H165, C182, and H185. Residues H288 and H293 each contribute to the Fe cation site.

This sequence belongs to the choline monooxygenase family. [2Fe-2S] cluster is required as a cofactor. Fe cation serves as cofactor. The cofactor is Mg(2+). In terms of tissue distribution, expressed in roots and leaves.

The protein resides in the plastid. The protein localises to the chloroplast stroma. The catalysed reaction is choline + 2 reduced [2Fe-2S]-[ferredoxin] + O2 + 2 H(+) = betaine aldehyde hydrate + 2 oxidized [2Fe-2S]-[ferredoxin] + H2O. Its pathway is amine and polyamine biosynthesis; betaine biosynthesis via choline pathway; betaine aldehyde from choline (monooxygenase route): step 1/1. Functionally, catalyzes the first step of the osmoprotectant glycine betaine synthesis. This Atriplex hortensis (Mountain spinach) protein is Choline monooxygenase, chloroplastic (CMO).